The chain runs to 149 residues: Myoglobin (149 aa).

Threonine 2 bears the N-acetylthreonine mark. Residues 2 to 143 (TEWEHVNKVW…ICSDLETLYK (142 aa)) form the Globin domain. Residue histidine 60 coordinates nitrite. Histidine 60 is a binding site for O2. Histidine 89 is a heme b binding site.

Belongs to the globin family. As to quaternary structure, monomeric.

The protein resides in the cytoplasm. The protein localises to the sarcoplasm. It catalyses the reaction Fe(III)-heme b-[protein] + nitric oxide + H2O = Fe(II)-heme b-[protein] + nitrite + 2 H(+). The enzyme catalyses H2O2 + AH2 = A + 2 H2O. Functionally, monomeric heme protein which primary function is to store oxygen and facilitate its diffusion within muscle tissues. Reversibly binds oxygen through a pentacoordinated heme iron and enables its timely and efficient release as needed during periods of heightened demand. Depending on the oxidative conditions of tissues and cells, and in addition to its ability to bind oxygen, it also has a nitrite reductase activity whereby it regulates the production of bioactive nitric oxide. Under stress conditions, like hypoxia and anoxia, it also protects cells against reactive oxygen species thanks to its pseudoperoxidase activity. The protein is Myoglobin (mb) of Heterodontus portusjacksoni (Port Jackson shark).